The primary structure comprises 277 residues: 4-hydroxy-tetrahydrodipicolinate reductase (277 aa).

NAD(+) contacts are provided by residues 11–16 (GALGRM) and 110–112 (GTT). Histidine 166 (proton donor/acceptor) is an active-site residue. Residue histidine 167 participates in (S)-2,3,4,5-tetrahydrodipicolinate binding. The active-site Proton donor is the lysine 170. 176-177 (GT) provides a ligand contact to (S)-2,3,4,5-tetrahydrodipicolinate.

It belongs to the DapB family.

It is found in the cytoplasm. It catalyses the reaction (S)-2,3,4,5-tetrahydrodipicolinate + NAD(+) + H2O = (2S,4S)-4-hydroxy-2,3,4,5-tetrahydrodipicolinate + NADH + H(+). The catalysed reaction is (S)-2,3,4,5-tetrahydrodipicolinate + NADP(+) + H2O = (2S,4S)-4-hydroxy-2,3,4,5-tetrahydrodipicolinate + NADPH + H(+). The protein operates within amino-acid biosynthesis; L-lysine biosynthesis via DAP pathway; (S)-tetrahydrodipicolinate from L-aspartate: step 4/4. Its function is as follows. Catalyzes the conversion of 4-hydroxy-tetrahydrodipicolinate (HTPA) to tetrahydrodipicolinate. In Parasynechococcus marenigrum (strain WH8102), this protein is 4-hydroxy-tetrahydrodipicolinate reductase.